The chain runs to 132 residues: MTGGKSGGKASGSKNAQSRSSKAGLAFPVGRVHRLLRKGNYAQRVGAGAPVYLAAVLEYLAAEILELAGNAARDNKKTRIIPRHLQLAIRNDEELNKLLGHVTIAQGGVLPNIHQNLLPKKTPKAGKGSQEL.

Over residues 1–10 (MTGGKSGGKA) the composition is skewed to gly residues. Residues 1–24 (MTGGKSGGKASGSKNAQSRSSKAG) are disordered. An N6-acetyllysine mark is found at lysine 5 and lysine 9. An N5-methylglutamine modification is found at glutamine 106. Position 129 is a phosphoserine (serine 129). A [ST]-Q motif motif is present at residues 129–130 (SQ).

The protein belongs to the histone H2A family. The nucleosome is a histone octamer containing two molecules each of H2A, H2B, H3 and H4 assembled in one H3-H4 heterotetramer and two H2A-H2B heterodimers. The octamer wraps approximately 147 bp of DNA. In terms of processing, phosphorylated to form H2AS128ph (gamma-H2A) in response to DNA double-strand breaks (DSBs) generated by exogenous genotoxic agents and by stalled replication forks. Phosphorylation is dependent on the DNA damage checkpoint kinases mec1/ATR and tel1/ATM, spreads on either side of a detected DSB site and may mark the surrounding chromatin for recruitment of proteins required for DNA damage signaling and repair. Gamma-H2A is removed from the DNA prior to the strand invasion-primer extension step of the repair process and subsequently dephosphorylated. Dephosphorylation is necessary for efficient recovery from the DNA damage checkpoint. Post-translationally, acetylated by esa1 to form H2AK4ac and H2AK7ac.

Its subcellular location is the nucleus. The protein resides in the chromosome. Core component of nucleosome which plays a central role in DNA double strand break (DSB) repair. Nucleosomes wrap and compact DNA into chromatin, limiting DNA accessibility to the cellular machineries which require DNA as a template. Histones thereby play a central role in transcription regulation, DNA repair, DNA replication and chromosomal stability. DNA accessibility is regulated via a complex set of post-translational modifications of histones, also called histone code, and nucleosome remodeling. In Emericella nidulans (strain FGSC A4 / ATCC 38163 / CBS 112.46 / NRRL 194 / M139) (Aspergillus nidulans), this protein is Histone H2A (htaA).